Here is a 307-residue protein sequence, read N- to C-terminus: Zinc transporter ZIP9 (307 aa).

A helical membrane pass occupies residues 4 to 24; the sequence is FISISLLSLAMLVGCYVAGII. Asn-29 carries N-linked (GlcNAc...) asparagine glycosylation. A run of 5 helical transmembrane segments spans residues 35–55, 106–126, 146–166, 176–196, and 210–230; these read LKLV…AVIV, AYIG…DQIG, ITTT…LGAA, LIVF…LVSF, and HLLV…LGLS. Residue Asn-241 is glycosylated (N-linked (GlcNAc...) asparagine). 2 helical membrane-spanning segments follow: residues 244–264 and 286–306; these read GVAM…HVLP and LEVA…VGHQ.

The protein belongs to the ZIP transporter (TC 2.A.5) family. As to expression, highly expressed in pancreas, testis, and pituitary and moderately in the kidney, liver, uterus, heart, prostate, and brain, whereas expression is lower in the ovary and colon.

It is found in the golgi apparatus. The protein resides in the trans-Golgi network membrane. The protein localises to the cell membrane. Its subcellular location is the cytoplasm. It localises to the perinuclear region. It is found in the mitochondrion. The protein resides in the nucleus. The catalysed reaction is Zn(2+)(in) = Zn(2+)(out). Its function is as follows. Transports zinc ions across cell and organelle membranes into the cytoplasm and regulates intracellular zinc homeostasis. Participates in the zinc ions efflux out of the secretory compartments. Regulates intracellular zinc level, resulting in the enhancement of AKT1 and MAPK3/MAPK1 (Erk1/2) phosphorylation in response to the BCR activation. Also functions as a membrane androgen receptor that mediates, through a G protein, the non-classical androgen signaling pathway, characterized by the activation of MAPK3/MAPK1 (Erk1/2) and transcription factors CREB1 or ATF1. This pathway contributes to CLDN1 and CLDN5 expression and tight junction formation between adjacent Sertoli cells. Mediates androgen-induced vascular endothelial cell proliferation through activation of an inhibitory G protein leading to the AKT1 and MAPK3/MAPK1 (Erk1/2) activation which in turn modulate inhibition (phosphorylation) of GSK3B and CCND1 transcription. Moreover, has dual functions as a membrane-bound androgen receptor and as an androgen-dependent zinc transporter both of which are mediated through an inhibitory G protein (Gi) that mediates both MAP kinase and zinc signaling leading to the androgen-dependent apoptotic process. The protein is Zinc transporter ZIP9 of Homo sapiens (Human).